A 474-amino-acid chain; its full sequence is AAA-ATPase At3g28610 (474 aa).

Positions 1 to 25 are cleaved as a signal peptide; the sequence is MMGNMFGSSLASLFFLWATIQQIFP. Position 244 to 251 (244 to 251) interacts with ATP; it reads GPPGTGKS.

This sequence belongs to the AAA ATPase family. BCS1 subfamily. It depends on Mg(2+) as a cofactor.

The catalysed reaction is ATP + H2O = ADP + phosphate + H(+). The protein is AAA-ATPase At3g28610 of Arabidopsis thaliana (Mouse-ear cress).